We begin with the raw amino-acid sequence, 209 residues long: Small ribosomal subunit protein uS4 (209 aa).

An S4 RNA-binding domain is found at 98–159; that stretch reads RRLDSAVYRL…KSRKITRIND (62 aa).

It belongs to the universal ribosomal protein uS4 family. Part of the 30S ribosomal subunit. Contacts protein S5. The interaction surface between S4 and S5 is involved in control of translational fidelity.

Its function is as follows. One of the primary rRNA binding proteins, it binds directly to 16S rRNA where it nucleates assembly of the body of the 30S subunit. Functionally, with S5 and S12 plays an important role in translational accuracy. The sequence is that of Small ribosomal subunit protein uS4 from Syntrophotalea carbinolica (strain DSM 2380 / NBRC 103641 / GraBd1) (Pelobacter carbinolicus).